The primary structure comprises 210 residues: Thymidylate kinase (210 aa).

11-18 (GVDGAGKT) contributes to the ATP binding site.

It belongs to the thymidylate kinase family.

The catalysed reaction is dTMP + ATP = dTDP + ADP. Functionally, phosphorylation of dTMP to form dTDP in both de novo and salvage pathways of dTTP synthesis. This is Thymidylate kinase (tmk) from Mycoplasma genitalium (strain ATCC 33530 / DSM 19775 / NCTC 10195 / G37) (Mycoplasmoides genitalium).